Here is a 212-residue protein sequence, read N- to C-terminus: MQSAMFLTVHHDCGPMDKSAGTGPKSEEKREKMKRTLLKDWKTRLSYFLQNSSSPGKPKTGKKSKPQTFIKPSPEEAQLWAEAFDELLASKYGLAAFRAFLKSEFCEENIEFWLACEDFKKTKSPQKLSSKARKIYTDFIEKEAPKEINIDFQTKTLIAQNIQEATSGCFTTAQKRVYSLMENNSYPRFLESEFYQDLCRKPPQITTEPHAT.

2 disordered regions span residues 11-33 and 48-69; these read HDCGPMDKSAGTGPKSEEKREKM and FLQNSSSPGKPKTGKKSKPQTF. Residues 32–66 are necessary for membrane association; sequence KMKRTLLKDWKTRLSYFLQNSSSPGKPKTGKKSKP. The segment at 79 to 116 is necessary to inhibit protein synthesis; it reads LWAEAFDELLASKYGLAAFRAFLKSEFCEENIEFWLAC. Residues 83–199 enclose the RGS domain; the sequence is AFDELLASKY…LESEFYQDLC (117 aa).

In terms of assembly, interacts with GNAQ. Does not interact with GNAI1 and GNAI3. Interacts with EIF2B5. Interacts with PRKG1 (isoform alpha). Phosphorylated by protein kinase C. Phosphorylation by PRKG1 leads to activation of RGS2 activity.

It is found in the cell membrane. It localises to the cytoplasm. The protein resides in the nucleus. Its subcellular location is the nucleolus. Regulates G protein-coupled receptor signaling cascades. Inhibits signal transduction by increasing the GTPase activity of G protein alpha subunits, thereby driving them into their inactive GDP-bound form. It is involved in the negative regulation of the angiotensin-activated signaling pathway. Plays a role in the regulation of blood pressure in response to signaling via G protein-coupled receptors and GNAQ. Plays a role in regulating the constriction and relaxation of vascular smooth muscle. Binds EIF2B5 and blocks its activity, thereby inhibiting the translation of mRNA into protein. This chain is Regulator of G-protein signaling 2 (RGS2), found in Sus scrofa (Pig).